We begin with the raw amino-acid sequence, 328 residues long: Glycerol-3-phosphate dehydrogenase [NAD(P)+] (328 aa).

Positions 15, 35, and 108 each coordinate NADPH. Sn-glycerol 3-phosphate-binding residues include Lys108, Gly136, and Ser138. Ala140 serves as a coordination point for NADPH. Residues Lys191, Asp244, Ser254, Arg255, and Asn256 each contribute to the sn-glycerol 3-phosphate site. Catalysis depends on Lys191, which acts as the Proton acceptor. Arg255 provides a ligand contact to NADPH. 2 residues coordinate NADPH: Leu275 and Glu277.

The protein belongs to the NAD-dependent glycerol-3-phosphate dehydrogenase family.

Its subcellular location is the cytoplasm. The enzyme catalyses sn-glycerol 3-phosphate + NAD(+) = dihydroxyacetone phosphate + NADH + H(+). It catalyses the reaction sn-glycerol 3-phosphate + NADP(+) = dihydroxyacetone phosphate + NADPH + H(+). Its pathway is membrane lipid metabolism; glycerophospholipid metabolism. Catalyzes the reduction of the glycolytic intermediate dihydroxyacetone phosphate (DHAP) to sn-glycerol 3-phosphate (G3P), the key precursor for phospholipid synthesis. This chain is Glycerol-3-phosphate dehydrogenase [NAD(P)+], found in Azorhizobium caulinodans (strain ATCC 43989 / DSM 5975 / JCM 20966 / LMG 6465 / NBRC 14845 / NCIMB 13405 / ORS 571).